A 108-amino-acid polypeptide reads, in one-letter code: MMKNQLAGLMKQAQAMQDNMKKMQDQLASIEVEGQSGAGLVKVVMSCKNDVKRVSIDPSLLADDKDMLEDLVAAAFNDAVRKAEATSQEKMSGVTAGMPLPPGFKMPF.

This sequence belongs to the YbaB/EbfC family. Homodimer.

The protein resides in the cytoplasm. Its subcellular location is the nucleoid. Functionally, binds to DNA and alters its conformation. May be involved in regulation of gene expression, nucleoid organization and DNA protection. This is Nucleoid-associated protein mma_2329 from Janthinobacterium sp. (strain Marseille) (Minibacterium massiliensis).